Consider the following 388-residue polypeptide: Chorismate synthase (388 aa).

NADP(+)-binding residues include R39 and R45. The segment at E95–G115 is disordered. Residues K98–P108 show a composition bias toward basic residues. FMN is bound by residues R130–S132, N251–A252, G296, K311–T315, and R337.

Belongs to the chorismate synthase family. In terms of assembly, homotetramer. It depends on FMNH2 as a cofactor.

The enzyme catalyses 5-O-(1-carboxyvinyl)-3-phosphoshikimate = chorismate + phosphate. Its pathway is metabolic intermediate biosynthesis; chorismate biosynthesis; chorismate from D-erythrose 4-phosphate and phosphoenolpyruvate: step 7/7. Catalyzes the anti-1,4-elimination of the C-3 phosphate and the C-6 proR hydrogen from 5-enolpyruvylshikimate-3-phosphate (EPSP) to yield chorismate, which is the branch point compound that serves as the starting substrate for the three terminal pathways of aromatic amino acid biosynthesis. This reaction introduces a second double bond into the aromatic ring system. This Enterococcus faecalis (strain ATCC 700802 / V583) protein is Chorismate synthase.